Here is a 251-residue protein sequence, read N- to C-terminus: DNA repair protein RecO (251 aa).

This sequence belongs to the RecO family.

Its function is as follows. Involved in DNA repair and RecF pathway recombination. The polypeptide is DNA repair protein RecO (Streptococcus mutans serotype c (strain ATCC 700610 / UA159)).